The sequence spans 2550 residues: Highly reducing polyketide synthase otaA (2550 aa).

A Ketosynthase family 3 (KS3) domain is found at 9 to 431; it reads SEPLAIIGLA…GTNAHAVVED (423 aa). Active-site for beta-ketoacyl synthase activity residues include Cys182, His317, and His355. Residues 572 to 894 form a malonyl-CoA:ACP transacylase (MAT) domain region; sequence FVFTGQGANW…KRYETNGSTI (323 aa). The N-terminal hotdog fold stretch occupies residues 959–1094; that stretch reads HELLGVPVED…GSVRAETGPP (136 aa). The dehydratase (DH) domain stretch occupies residues 959 to 1252; the sequence is HELLGVPVED…DLVQLPANND (294 aa). The PKS/mFAS DH domain occupies 959–1253; sequence HELLGVPVED…LVQLPANNDD (295 aa). Positions 1107–1253 are C-terminal hotdog fold; that stretch reads AEPVDIAQMY…LVQLPANNDD (147 aa). S-adenosyl-L-methionine is bound by residues Ile1420 and Glu1442. Residues 1433-1612 form a methyltransferase (CMeT) domain region; the sequence is HAQTGIKILE…GLRPRLIIND (180 aa). Residues 1859–1919 are enoyl reductase (ER) (ER) domain; the sequence is PDEVKIRIHA…DQVMALRTGP (61 aa). The interval 2166-2345 is ketoreductase (KR) domain; it reads ASYLLIGGFG…PATSVSLGSV (180 aa). The Carrier domain maps to 2454 to 2531; the sequence is AAVEVVTRAI…QLAQQAADAS (78 aa). Residue Ser2491 is modified to O-(pantetheine 4'-phosphoryl)serine.

Requires pantetheine 4'-phosphate as cofactor.

The enzyme catalyses 4 malonyl-CoA + acetyl-CoA + 5 NADPH + 9 H(+) = 7-methylmellein + 3 CO2 + 5 NADP(+) + 5 CoA + 4 H2O. The protein operates within mycotoxin biosynthesis. Its function is as follows. Highly reducing polyketide synthase; part of the gene cluster that mediates the biosynthesis of ochratoxin A (OTA), a mycotoxin composed of a chlorinated type I polyketide dihydroisocoumarin moiety linked to L-phenylalanine, and demonstrated to have nephrotoxic, immunotoxic, genotoxic, neurotoxic, and teratogenic properties. OtaA catalyzes the condensation of one acetate and 4 malonate units to form the isocoumarin group. The pathway begins with the highly reducing polyketide synthase otaA that catalyzes the formation of the isocoumarin group during the initial stages of biosynthesis, starting from one acetate and 4 malonate units, to originate the characteristic pentaketide skeleton 7-methylmellein (7-MM) of the OTA molecule. The newly identified cyclase otaY might be involved in the polyketide cyclization reaction during the initial steps of the OTA biosynthesis. 7-MM is then oxidized into 7-carboxymellein (also called ochratoxin beta) by the cytochrome P450 monooxygenase otaC. The NRPS encoded by the otaB gene is involved in the linking of phenylalanine to the dihydroisocoumarin ring. The reaction catalyzed by NRPS results in the production of ochratoxin B (OTB), which is the non-chlorinated analog of OTA and which subsequently serves as the substrate of the halogenase otaD for chlorination activity to form the final molecular structure of OTA, containing a chlorine atom in the C-5 position of the molecule. This is Highly reducing polyketide synthase otaA from Aspergillus niger (strain ATCC MYA-4892 / CBS 513.88 / FGSC A1513).